Here is a 504-residue protein sequence, read N- to C-terminus: WD repeat-containing protein 55 homolog (504 aa).

Acidic residues predominate over residues 32 to 49 (QEVVNESDSEIGEYDLGD). Positions 32–135 (QEVVNESDSE…NAFDMDEDDE (104 aa)) are disordered. The span at 66-76 (DSISSDGSFNP) shows a compositional bias: polar residues. Over residues 77–95 (NDEDSDTDSDDSMLDEPDE) the composition is skewed to acidic residues. Positions 114–124 (SGSSNRNQDSD) are enriched in polar residues. WD repeat units follow at residues 158–197 (KLED…NKLL), 202–241 (VHAK…LKKL), 245–283 (AHDD…SIFE), 286–325 (EIED…LYVQ), 328–367 (PYEE…YHCD), and 412–451 (QHNM…DFGD). Residues 484 to 504 (AKEDNNDNENDDATAGPSNTT) are disordered.

It belongs to the WD repeat WDR55 family.

The chain is WD repeat-containing protein 55 homolog from Drosophila willistoni (Fruit fly).